A 98-amino-acid polypeptide reads, in one-letter code: uncharacterized protein (98 aa).

The 55-residue stretch at 37 to 91 folds into the HTH cro/C1-type domain; it reads LITSRQQLGISQKQLETLSGVKQPMIARIEKGQTNPQLETLLKLLAPLGKTLSIV. Residues 48–67 constitute a DNA-binding region (H-T-H motif); sequence QKQLETLSGVKQPMIARIEK.

This is an uncharacterized protein from Haemophilus influenzae (strain ATCC 51907 / DSM 11121 / KW20 / Rd).